The following is a 170-amino-acid chain: Adenine phosphoribosyltransferase (170 aa).

It belongs to the purine/pyrimidine phosphoribosyltransferase family. Homodimer.

The protein resides in the cytoplasm. It carries out the reaction AMP + diphosphate = 5-phospho-alpha-D-ribose 1-diphosphate + adenine. Its pathway is purine metabolism; AMP biosynthesis via salvage pathway; AMP from adenine: step 1/1. Its function is as follows. Catalyzes a salvage reaction resulting in the formation of AMP, that is energically less costly than de novo synthesis. In Geobacillus sp. (strain WCH70), this protein is Adenine phosphoribosyltransferase.